The sequence spans 876 residues: Leucine--tRNA ligase (876 aa).

Positions 43-53 (PYPSGRIHMGH) match the 'HIGH' region motif. Positions 632-636 (KMSKS) match the 'KMSKS' region motif. Lys-635 contacts ATP.

This sequence belongs to the class-I aminoacyl-tRNA synthetase family.

The protein resides in the cytoplasm. The catalysed reaction is tRNA(Leu) + L-leucine + ATP = L-leucyl-tRNA(Leu) + AMP + diphosphate. This is Leucine--tRNA ligase from Agrobacterium fabrum (strain C58 / ATCC 33970) (Agrobacterium tumefaciens (strain C58)).